Here is a 334-residue protein sequence, read N- to C-terminus: S-adenosylmethionine decarboxylase proenzyme 1 (334 aa).

Phe-7 is a substrate binding site. Active-site residues include Glu-8 and Glu-11. Residue Glu-67 participates in substrate binding. Ser-68 serves as the catalytic Schiff-base intermediate with substrate; via pyruvic acid. Pyruvic acid (Ser); by autocatalysis is present on Ser-68. Cys-82 (proton donor; for catalytic activity) is an active-site residue. Phe-223 is a substrate binding site. Residues Ser-229 and His-243 each act as proton acceptor; for processing activity in the active site. Position 247 (Glu-247) interacts with substrate. Ser-298 bears the Phosphoserine mark.

Belongs to the eukaryotic AdoMetDC family. As to quaternary structure, heterotetramer of two alpha and two beta chains. The cofactor is pyruvate. Post-translationally, is synthesized initially as an inactive proenzyme. Formation of the active enzyme involves a self-maturation process in which the active site pyruvoyl group is generated from an internal serine residue via an autocatalytic post-translational modification. Two non-identical subunits are generated from the proenzyme in this reaction, and the pyruvate is formed at the N-terminus of the alpha chain, which is derived from the carboxyl end of the proenzyme. The post-translation cleavage follows an unusual pathway, termed non-hydrolytic serinolysis, in which the side chain hydroxyl group of the serine supplies its oxygen atom to form the C-terminus of the beta chain, while the remainder of the serine residue undergoes an oxidative deamination to produce ammonia and the pyruvoyl group blocking the N-terminus of the alpha chain. As to expression, expressed in embryonic stem cells; subsequently down-regulated in differentiating neural precursor cells.

It carries out the reaction S-adenosyl-L-methionine + H(+) = S-adenosyl 3-(methylsulfanyl)propylamine + CO2. The protein operates within amine and polyamine biosynthesis; S-adenosylmethioninamine biosynthesis; S-adenosylmethioninamine from S-adenosyl-L-methionine: step 1/1. Functionally, essential for biosynthesis of the polyamines spermidine and spermine. Promotes maintenance and self-renewal of embryonic stem cells, by maintaining spermine levels. The sequence is that of S-adenosylmethionine decarboxylase proenzyme 1 (Amd1) from Mus musculus (Mouse).